Reading from the N-terminus, the 930-residue chain is Serine/threonine-protein kinase ATG1 (930 aa).

A Protein kinase domain is found at 23 to 326 (FIIDREIGKG…FENFFAHHVV (304 aa)). ATP is bound by residues 29 to 37 (IGKGSFAQV) and lysine 52. The Proton acceptor role is filled by aspartate 166. Disordered regions lie at residues 336 to 468 (DDIP…TEEE), 504 to 563 (GQNN…SASP), 853 to 874 (ISSGKEIAKDATQEGSDLDTEE), and 904 to 930 (NQAKHVSAMRRLSGDVTPRSVPSYGST). Residues 337–350 (DIPKPPKRELETIR) show a composition bias toward basic and acidic residues. Over residues 377 to 393 (SPKSPRSSPRSSTVNSS) the composition is skewed to low complexity. Polar residues-rich tracts occupy residues 400–417 (RQSQNAERRLSISSHNSG) and 504–531 (GQNNSSAKSSPLQRRYTQQGSATSTTGA). Residues 629–897 (AAQAIEEFAT…RLNMVRKKQQ (269 aa)) are ATG13-binding.

It belongs to the protein kinase superfamily. Ser/Thr protein kinase family. APG1/unc-51/ULK1 subfamily. Homodimer. Dimerization requires the presence of ATG13. Forms a ternary complex with ATG13 and ATG17.

The protein localises to the cytoplasm. Its subcellular location is the preautophagosomal structure membrane. It carries out the reaction L-seryl-[protein] + ATP = O-phospho-L-seryl-[protein] + ADP + H(+). The catalysed reaction is L-threonyl-[protein] + ATP = O-phospho-L-threonyl-[protein] + ADP + H(+). In terms of biological role, serine/threonine protein kinase involved in the cytoplasm to vacuole transport (Cvt) and found to be essential in autophagy, where it is required for the formation of autophagosomes. Involved in the clearance of protein aggregates which cannot be efficiently cleared by the proteasome. Required for selective autophagic degradation of the nucleus (nucleophagy) as well as for mitophagy which contributes to regulate mitochondrial quantity and quality by eliminating the mitochondria to a basal level to fulfill cellular energy requirements and preventing excess ROS production. Also involved in endoplasmic reticulum-specific autophagic process, in selective removal of ER-associated degradation (ERAD) substrates. Plays a key role in ATG9 and ATG23 cycling through the pre-autophagosomal structure and is necessary to promote ATG18 binding to ATG9 through phosphorylation of ATG9. Catalyzes phosphorylation of ATG4, decreasing the interaction between ATG4 and ATG8 and impairing deconjugation of PE-conjugated forms of ATG8. Contributes to conidiation by regulating the conidial levels of the conidiation-related protein CP15 and mediates fungal oxidation resistance by controlling total superoxide dismutase (SOD) activity. This chain is Serine/threonine-protein kinase ATG1, found in Beauveria bassiana (strain ARSEF 2860) (White muscardine disease fungus).